Here is a 150-residue protein sequence, read N- to C-terminus: Histone deacetylase complex subunit SAP18 (150 aa).

The protein belongs to the SAP18 family. Forms a complex with SIN3 and histone deacetylase. Interacts with the N-terminal residues of TRL. Interacts with BCD; in vitro and yeast cells.

It is found in the nucleus. Its subcellular location is the cytoplasm. In terms of biological role, involved in the tethering of the SIN3 complex to core histone proteins. Interacts with bicoid (bcd) to repress transcription of bicoid target genes in the anterior tip of the embryo; a process known as retraction. Interacts with Trl and binds to Polycomb response elements at the bithorax complex. May contribute to the regulation of other homeotic gene expressions. This Drosophila melanogaster (Fruit fly) protein is Histone deacetylase complex subunit SAP18 (Bin1).